A 142-amino-acid chain; its full sequence is Prefoldin subunit alpha 2 (142 aa).

It belongs to the prefoldin subunit alpha family. In terms of assembly, heterohexamer of two alpha and four beta subunits.

The protein localises to the cytoplasm. Molecular chaperone capable of stabilizing a range of proteins. Seems to fulfill an ATP-independent, HSP70-like function in archaeal de novo protein folding. The polypeptide is Prefoldin subunit alpha 2 (Thermococcus kodakarensis (strain ATCC BAA-918 / JCM 12380 / KOD1) (Pyrococcus kodakaraensis (strain KOD1))).